The sequence spans 185 residues: Translocon-associated protein subunit gamma (185 aa).

The residue at position 1 (methionine 1) is an N-acetylmethionine. Residues 1–27 (MAPKGGSKQQSEEDLLLQDFSRNLSAK) are Lumenal-facing. Phosphoserine occurs at positions 7 and 11. The helical transmembrane segment at 28-48 (SSALFFGNAFIVSAIPIWLYW) threads the bilayer. Topologically, residues 49–54 (RIWHMD) are cytoplasmic. A helical membrane pass occupies residues 55 to 76 (LIQSAVLYSVMTLVSTYLVAFA). Residues 77–135 (YKNVKFVLKHKVAQKREDAVSKEVTRKLSEADNRKMSRKEKDERILWKKNEVADYEATT) are Lumenal-facing. A Phosphoserine modification is found at serine 105. The helical transmembrane segment at 136-157 (FSIFYNNTLFLVLVIVASFFIL) threads the bilayer. Residues 158–163 (KNFNPT) lie on the Cytoplasmic side of the membrane. The helical transmembrane segment at 164–184 (VNYILSISASSGLIALLSTGS) threads the bilayer.

The protein belongs to the TRAP-gamma family. As to quaternary structure, heterotetramer of TRAP-alpha, TRAP-beta, TRAP-delta and TRAP-gamma.

The protein resides in the endoplasmic reticulum membrane. TRAP proteins are part of a complex whose function is to bind calcium to the ER membrane and thereby regulate the retention of ER resident proteins. The sequence is that of Translocon-associated protein subunit gamma (Ssr3) from Mus musculus (Mouse).